A 336-amino-acid chain; its full sequence is 4-hydroxythreonine-4-phosphate dehydrogenase (336 aa).

Substrate contacts are provided by His-142 and Thr-143. 3 residues coordinate a divalent metal cation: His-172, His-217, and His-274. 3 residues coordinate substrate: Lys-282, Asn-291, and Arg-300.

It belongs to the PdxA family. Homodimer. Zn(2+) is required as a cofactor. The cofactor is Mg(2+). It depends on Co(2+) as a cofactor.

It localises to the cytoplasm. It carries out the reaction 4-(phosphooxy)-L-threonine + NAD(+) = 3-amino-2-oxopropyl phosphate + CO2 + NADH. It participates in cofactor biosynthesis; pyridoxine 5'-phosphate biosynthesis; pyridoxine 5'-phosphate from D-erythrose 4-phosphate: step 4/5. Catalyzes the NAD(P)-dependent oxidation of 4-(phosphooxy)-L-threonine (HTP) into 2-amino-3-oxo-4-(phosphooxy)butyric acid which spontaneously decarboxylates to form 3-amino-2-oxopropyl phosphate (AHAP). This is 4-hydroxythreonine-4-phosphate dehydrogenase from Trichlorobacter lovleyi (strain ATCC BAA-1151 / DSM 17278 / SZ) (Geobacter lovleyi).